Here is a 190-residue protein sequence, read N- to C-terminus: Vascular endothelial growth factor A (190 aa).

An N-terminal signal peptide occupies residues 1–26 (MNFLLSWVHWTLALLLYLHHAKWSQA). Disulfide bonds link C51/C93, C82/C127, and C86/C129. An N-linked (GlcNAc...) asparagine glycan is attached at N100.

The protein belongs to the PDGF/VEGF growth factor family. In terms of assembly, homodimer; disulfide-linked. Also found as heterodimer with PGF. Interacts with NRP1. Interacts with isoform 2 of BSG. Interacts with CD82; this interaction inhibits VEGFA-mediated signaling pathway.

It is found in the secreted. Growth factor active in angiogenesis, vasculogenesis and endothelial cell growth. Induces endothelial cell proliferation, promotes cell migration, inhibits apoptosis and induces permeabilization of blood vessels. Binds to the FLT1/VEGFR1 and KDR/VEGFR2 receptors, heparan sulfate and heparin. Binding to NRP1 receptor initiates a signaling pathway needed for motor neuron axon guidance and cell body migration, including for the caudal migration of facial motor neurons from rhombomere 4 to rhombomere 6 during embryonic development. Also binds the DEAR/FBXW7-AS1 receptor. This is Vascular endothelial growth factor A (VEGFA) from Mesocricetus auratus (Golden hamster).